The chain runs to 73 residues: Large ribosomal subunit protein bL31 (73 aa).

The protein belongs to the bacterial ribosomal protein bL31 family. Type A subfamily. Part of the 50S ribosomal subunit.

Binds the 23S rRNA. In Mesorhizobium japonicum (strain LMG 29417 / CECT 9101 / MAFF 303099) (Mesorhizobium loti (strain MAFF 303099)), this protein is Large ribosomal subunit protein bL31.